We begin with the raw amino-acid sequence, 361 residues long: Protein RecA (361 aa).

G68 to T75 serves as a coordination point for ATP. Residues P342–E361 form a disordered region. Over residues G344–E361 the composition is skewed to basic and acidic residues.

It belongs to the RecA family.

Its subcellular location is the cytoplasm. Functionally, can catalyze the hydrolysis of ATP in the presence of single-stranded DNA, the ATP-dependent uptake of single-stranded DNA by duplex DNA, and the ATP-dependent hybridization of homologous single-stranded DNAs. It interacts with LexA causing its activation and leading to its autocatalytic cleavage. The protein is Protein RecA of Clostridium beijerinckii (strain ATCC 51743 / NCIMB 8052) (Clostridium acetobutylicum).